A 123-amino-acid polypeptide reads, in one-letter code: MPTINQLIRKKRQSSASRKKSPALQKCPQRRGVCLQVKTKTPKKPNSALRKVAWVRLSNGQEVIAYIGGEGHNLQEHSIVLVQGGRVKDLPGVRYHIVRGALDCAAVKNRKQSRSRYGAKRPK.

The segment at methionine 1–glutamine 29 is disordered. Residues isoleucine 8–serine 21 are compositionally biased toward basic residues. Aspartate 89 carries the post-translational modification 3-methylthioaspartic acid.

This sequence belongs to the universal ribosomal protein uS12 family. As to quaternary structure, part of the 30S ribosomal subunit. Contacts proteins S8 and S17. May interact with IF1 in the 30S initiation complex.

Its function is as follows. With S4 and S5 plays an important role in translational accuracy. In terms of biological role, interacts with and stabilizes bases of the 16S rRNA that are involved in tRNA selection in the A site and with the mRNA backbone. Located at the interface of the 30S and 50S subunits, it traverses the body of the 30S subunit contacting proteins on the other side and probably holding the rRNA structure together. The combined cluster of proteins S8, S12 and S17 appears to hold together the shoulder and platform of the 30S subunit. This Chlamydia abortus (strain DSM 27085 / S26/3) (Chlamydophila abortus) protein is Small ribosomal subunit protein uS12.